We begin with the raw amino-acid sequence, 212 residues long: Probable GTP-binding protein EngB (212 aa).

Positions 25–199 constitute an EngB-type G domain; it reads FGYEVAFAGR…WAKLDEWMEY (175 aa). GTP is bound by residues 33–40, 60–64, 78–81, 145–148, and 178–180; these read GRSNAGKS, GRTQL, DLPG, TKSD, and FSS. Positions 40 and 62 each coordinate Mg(2+).

The protein belongs to the TRAFAC class TrmE-Era-EngA-EngB-Septin-like GTPase superfamily. EngB GTPase family. Mg(2+) is required as a cofactor.

Functionally, necessary for normal cell division and for the maintenance of normal septation. The polypeptide is Probable GTP-binding protein EngB (Hydrogenovibrio crunogenus (strain DSM 25203 / XCL-2) (Thiomicrospira crunogena)).